Here is a 774-residue protein sequence, read N- to C-terminus: Protein translocase subunit SecA (774 aa).

ATP-binding positions include glutamine 66, 84 to 88, and aspartate 474; that span reads GEGKS.

It belongs to the SecA family.

It is found in the plastid. Its subcellular location is the chloroplast stroma. It localises to the chloroplast thylakoid membrane. The enzyme catalyses ATP + H2O + cellular proteinSide 1 = ADP + phosphate + cellular proteinSide 2.. Its function is as follows. Has a central role in coupling the hydrolysis of ATP to the transfer of proteins across the thylakoid membrane. The polypeptide is Protein translocase subunit SecA (Cyanidioschyzon merolae (strain NIES-3377 / 10D) (Unicellular red alga)).